The following is a 604-amino-acid chain: Aspartate--tRNA(Asp/Asn) ligase (604 aa).

Position 175 (Glu175) interacts with L-aspartate. The segment at 199–202 (QQFK) is aspartate. Residues Arg221 and His456 each contribute to the L-aspartate site. 221–223 (RDE) provides a ligand contact to ATP. Glu496 is a binding site for ATP. Arg503 lines the L-aspartate pocket. 548 to 551 (GVDR) serves as a coordination point for ATP.

This sequence belongs to the class-II aminoacyl-tRNA synthetase family. Type 1 subfamily. In terms of assembly, homodimer.

It localises to the cytoplasm. The enzyme catalyses tRNA(Asx) + L-aspartate + ATP = L-aspartyl-tRNA(Asx) + AMP + diphosphate. Its function is as follows. Aspartyl-tRNA synthetase with relaxed tRNA specificity since it is able to aspartylate not only its cognate tRNA(Asp) but also tRNA(Asn). Reaction proceeds in two steps: L-aspartate is first activated by ATP to form Asp-AMP and then transferred to the acceptor end of tRNA(Asp/Asn). The chain is Aspartate--tRNA(Asp/Asn) ligase from Methylobacterium nodulans (strain LMG 21967 / CNCM I-2342 / ORS 2060).